The chain runs to 284 residues: uncharacterized protein (284 aa).

The N-terminal stretch at 1–23 (MKRGCAIAVMICGLITSVSAASA) is a signal peptide.

It belongs to the surface antigen msp4 family.

This is an uncharacterized protein from Brucella melitensis biotype 1 (strain ATCC 23456 / CCUG 17765 / NCTC 10094 / 16M).